A 183-amino-acid chain; its full sequence is MDIDPYKEFGATVELLSFLPSDFFPSVRDLLDTAAALYREALESPEHCSPHHTALRQAILCWVELMTLATWVGNNLEDPASRDLVVNYVNTNMGLKIRQLLWFHISCLTFGRETVLEYLVSFGVWIGTPPAYRPPNAPILSTLPETTVVRRRGRSPRRRTPSPRRRRSQSPRRRRSQSRESQC.

Positions 136–183 are disordered; the sequence is NAPILSTLPETTVVRRRGRSPRRRTPSPRRRRSQSPRRRRSQSRESQC. The span at 149–176 shows a compositional bias: basic residues; it reads VRRRGRSPRRRTPSPRRRRSQSPRRRRS. Phosphoserine; by host is present on residues Ser-155, Ser-162, and Ser-170. Residues 155–161 form a 1; half-length repeat; sequence SPRRRTP. The interval 155–177 is 3 X 8 AA repeats of S-P-R-R-R-[PR]-S-Q; it reads SPRRRTPSPRRRRSQSPRRRRSQ. The Bipartite nuclear localization signal motif lies at 158 to 175; it reads RRTPSPRRRRSQSPRRRR. 2 consecutive repeat copies span residues 162–169 and 170–177. An RNA binding region spans residues 177–183; the sequence is QSRESQC.

It belongs to the orthohepadnavirus core antigen family. In terms of assembly, homodimerizes, then multimerizes. Interacts with cytosol exposed regions of viral L glycoprotein present in the reticulum-to-Golgi compartment. Interacts with human FLNB. Phosphorylated form interacts with host importin alpha; this interaction depends on the exposure of the NLS, which itself depends upon genome maturation and/or phosphorylation of the capsid protein. Interacts with host NUP153. Post-translationally, phosphorylated by host SRPK1, SRPK2, and maybe protein kinase C or GAPDH. Phosphorylation is critical for pregenomic RNA packaging. Protein kinase C phosphorylation is stimulated by HBx protein and may play a role in transport of the viral genome to the nucleus at the late step during the viral replication cycle.

The protein localises to the virion. The protein resides in the host cytoplasm. Self assembles to form an icosahedral capsid. Most capsids appear to be large particles with an icosahedral symmetry of T=4 and consist of 240 copies of capsid protein, though a fraction forms smaller T=3 particles consisting of 180 capsid proteins. Entering capsids are transported along microtubules to the nucleus. Phosphorylation of the capsid is thought to induce exposure of nuclear localization signal in the C-terminal portion of the capsid protein that allows binding to the nuclear pore complex via the importin (karyopherin-) alpha and beta. Capsids are imported in intact form through the nuclear pore into the nuclear basket, where it probably binds NUP153. Only capsids that contain the mature viral genome can release the viral DNA and capsid protein into the nucleoplasm. Immature capsids get stuck in the basket. Capsids encapsulate the pre-genomic RNA and the P protein. Pre-genomic RNA is reverse-transcribed into DNA while the capsid is still in the cytoplasm. The capsid can then either be directed to the nucleus, providing more genomes for transcription, or bud through the endoplasmic reticulum to provide new virions. In Homo sapiens (Human), this protein is Capsid protein.